We begin with the raw amino-acid sequence, 413 residues long: Type II methyltransferase M.NaeI (413 aa).

The SAM-dependent MTase C5-type domain occupies 4–317; it reads LEVVEICAGA…KRIRAALNME (314 aa). Cys-78 is an active-site residue.

Belongs to the class I-like SAM-binding methyltransferase superfamily. C5-methyltransferase family.

The enzyme catalyses a 2'-deoxycytidine in DNA + S-adenosyl-L-methionine = a 5-methyl-2'-deoxycytidine in DNA + S-adenosyl-L-homocysteine + H(+). Functionally, a methylase that recognizes the double-stranded sequence 5'-GCCGGC-3', methylates C-? on both strands, and protects the DNA from cleavage by the NaeI endonuclease. In Lentzea aerocolonigenes (Lechevalieria aerocolonigenes), this protein is Type II methyltransferase M.NaeI.